The following is a 305-amino-acid chain: Tyrosine recombinase XerD (305 aa).

The 86-residue stretch at 9 to 94 (MQDFGYVEQF…AIRRLFQYLH (86 aa)) folds into the Core-binding (CB) domain. Residues 115 to 299 (RLPKDISEEQ…ATERLKQIHS (185 aa)) form the Tyr recombinase domain. Active-site residues include R155, K179, H251, R254, and H277. Y286 (O-(3'-phospho-DNA)-tyrosine intermediate) is an active-site residue.

Belongs to the 'phage' integrase family. XerD subfamily. As to quaternary structure, forms a cyclic heterotetrameric complex composed of two molecules of XerC and two molecules of XerD.

It is found in the cytoplasm. In terms of biological role, site-specific tyrosine recombinase, which acts by catalyzing the cutting and rejoining of the recombining DNA molecules. The XerC-XerD complex is essential to convert dimers of the bacterial chromosome into monomers to permit their segregation at cell division. It also contributes to the segregational stability of plasmids. This is Tyrosine recombinase XerD from Vibrio vulnificus (strain CMCP6).